Reading from the N-terminus, the 238-residue chain is MTTELHDDASGRLIVGLDVPTIAEAEKVVEELGNAVSFYKIGYQLVFAGGLDFAKSLVAARKKVFLDMKLLDIDNTIAKGVENVAKMGVSMLTLHAYPKAMRAAVEAARGSDLCLLGVTVLTSMDNADLREAGYSDNAETLVLKRARQAHEAGMGGIVASAVEAQAIRQAVGPDMAIVTPGIRPAGSEKGDQKRVMTPADALRAGASHLVVARPIVGAPDRKAAALAILKEMRSIGRS.

Substrate contacts are provided by residues aspartate 18, lysine 40, 67-76, threonine 122, arginine 183, glutamine 192, and arginine 213; that span reads DMKLLDIDNT. Lysine 69 acts as the Proton donor in catalysis.

This sequence belongs to the OMP decarboxylase family. Type 1 subfamily. Homodimer.

It carries out the reaction orotidine 5'-phosphate + H(+) = UMP + CO2. It participates in pyrimidine metabolism; UMP biosynthesis via de novo pathway; UMP from orotate: step 2/2. In terms of biological role, catalyzes the decarboxylation of orotidine 5'-monophosphate (OMP) to uridine 5'-monophosphate (UMP). The protein is Orotidine 5'-phosphate decarboxylase of Brucella canis (strain ATCC 23365 / NCTC 10854 / RM-666).